The sequence spans 38 residues: Photosystem I reaction center subunit IX (38 aa).

A helical membrane pass occupies residues 4 to 24 (FLTAAPVVAAIWFTATAGILI).

It belongs to the PsaJ family.

The protein localises to the cellular thylakoid membrane. May help in the organization of the PsaE and PsaF subunits. This is Photosystem I reaction center subunit IX from Synechococcus sp. (strain CC9605).